Reading from the N-terminus, the 405-residue chain is Phosphoglycerate kinase (405 aa).

Substrate contacts are provided by residues 24-26, Arg40, 63-66, Arg122, and Arg162; these read DFN and HLGR. Residues Lys212, Glu331, and 361 to 364 each bind ATP; that span reads GGDS.

Belongs to the phosphoglycerate kinase family. In terms of assembly, monomer.

The protein localises to the cytoplasm. It catalyses the reaction (2R)-3-phosphoglycerate + ATP = (2R)-3-phospho-glyceroyl phosphate + ADP. Its pathway is carbohydrate degradation; glycolysis; pyruvate from D-glyceraldehyde 3-phosphate: step 2/5. The sequence is that of Phosphoglycerate kinase (pgk) from Corynebacterium glutamicum (strain ATCC 13032 / DSM 20300 / JCM 1318 / BCRC 11384 / CCUG 27702 / LMG 3730 / NBRC 12168 / NCIMB 10025 / NRRL B-2784 / 534).